The sequence spans 100 residues: Aspartyl/glutamyl-tRNA(Asn/Gln) amidotransferase subunit C (100 aa).

It belongs to the GatC family. As to quaternary structure, heterotrimer of A, B and C subunits.

The enzyme catalyses L-glutamyl-tRNA(Gln) + L-glutamine + ATP + H2O = L-glutaminyl-tRNA(Gln) + L-glutamate + ADP + phosphate + H(+). It carries out the reaction L-aspartyl-tRNA(Asn) + L-glutamine + ATP + H2O = L-asparaginyl-tRNA(Asn) + L-glutamate + ADP + phosphate + 2 H(+). Its function is as follows. Allows the formation of correctly charged Asn-tRNA(Asn) or Gln-tRNA(Gln) through the transamidation of misacylated Asp-tRNA(Asn) or Glu-tRNA(Gln) in organisms which lack either or both of asparaginyl-tRNA or glutaminyl-tRNA synthetases. The reaction takes place in the presence of glutamine and ATP through an activated phospho-Asp-tRNA(Asn) or phospho-Glu-tRNA(Gln). The sequence is that of Aspartyl/glutamyl-tRNA(Asn/Gln) amidotransferase subunit C from Streptococcus sanguinis (strain SK36).